The sequence spans 787 residues: Protocadherin beta-15 (787 aa).

Positions 1–26 are cleaved as a signal peptide; sequence MEPAGERFPEQRQVLILLLLLEVTLA. Topologically, residues 27-690 are extracellular; it reads GWEPRRYSVM…AQADSLTVYL (664 aa). 5 consecutive Cadherin domains span residues 35 to 133, 138 to 242, 247 to 347, 352 to 451, and 456 to 561; these read VMEE…SPEF, MTLK…APEF, YEVQ…FPEL, LTSP…APAF, and YTLF…SPFV. Asn-418 is a glycosylation site (N-linked (GlcNAc...) asparagine). Residue Asn-567 is glycosylated (N-linked (GlcNAc...) asparagine). Positions 568 to 671 constitute a Cadherin 6 domain; the sequence is GSAPCTELVP…LVDGFSQPYL (104 aa). Residues 691–711 form a helical membrane-spanning segment; the sequence is VVALASVSSLFLFSVFLFVAV. At 712–787 the chain is on the cytoplasmic side; the sequence is RLCRRSRAAS…DSRRKSEFLE (76 aa).

The protein localises to the cell membrane. Functionally, potential calcium-dependent cell-adhesion protein. May be involved in the establishment and maintenance of specific neuronal connections in the brain. The protein is Protocadherin beta-15 (PCDHB15) of Homo sapiens (Human).